Consider the following 372-residue polypeptide: Carbamoyl phosphate synthase small chain (372 aa).

Residues 1–184 (MKAYIYLEND…SFQKFNDAKR (184 aa)) form a CPSase region. L-glutamine contacts are provided by serine 45, glycine 240, and glycine 242. The Glutamine amidotransferase type-1 domain maps to 188–372 (KVAVIDYGVK…YIFKEFMNLM (185 aa)). Cysteine 268 serves as the catalytic Nucleophile. L-glutamine-binding residues include leucine 269, glutamine 272, asparagine 310, and tyrosine 313. Active-site residues include histidine 351 and glutamate 353.

This sequence belongs to the CarA family. As to quaternary structure, composed of two chains; the small (or glutamine) chain promotes the hydrolysis of glutamine to ammonia, which is used by the large (or ammonia) chain to synthesize carbamoyl phosphate. Tetramer of heterodimers (alpha,beta)4.

It carries out the reaction hydrogencarbonate + L-glutamine + 2 ATP + H2O = carbamoyl phosphate + L-glutamate + 2 ADP + phosphate + 2 H(+). The enzyme catalyses L-glutamine + H2O = L-glutamate + NH4(+). It participates in amino-acid biosynthesis; L-arginine biosynthesis; carbamoyl phosphate from bicarbonate: step 1/1. It functions in the pathway pyrimidine metabolism; UMP biosynthesis via de novo pathway; (S)-dihydroorotate from bicarbonate: step 1/3. Its function is as follows. Small subunit of the glutamine-dependent carbamoyl phosphate synthetase (CPSase). CPSase catalyzes the formation of carbamoyl phosphate from the ammonia moiety of glutamine, carbonate, and phosphate donated by ATP, constituting the first step of 2 biosynthetic pathways, one leading to arginine and/or urea and the other to pyrimidine nucleotides. The small subunit (glutamine amidotransferase) binds and cleaves glutamine to supply the large subunit with the substrate ammonia. The polypeptide is Carbamoyl phosphate synthase small chain (Campylobacter jejuni subsp. jejuni serotype O:2 (strain ATCC 700819 / NCTC 11168)).